Reading from the N-terminus, the 387-residue chain is Phosphoglycerate kinase (387 aa).

Substrate-binding positions include 21 to 23, arginine 36, 59 to 62, arginine 113, and arginine 146; these read DLN and HLGR. Residues lysine 197, glutamate 314, and 340-343 contribute to the ATP site; that span reads GGDT.

Belongs to the phosphoglycerate kinase family. As to quaternary structure, monomer.

Its subcellular location is the cytoplasm. The catalysed reaction is (2R)-3-phosphoglycerate + ATP = (2R)-3-phospho-glyceroyl phosphate + ADP. It participates in carbohydrate degradation; glycolysis; pyruvate from D-glyceraldehyde 3-phosphate: step 2/5. The sequence is that of Phosphoglycerate kinase from Pseudomonas fluorescens (strain SBW25).